A 602-amino-acid polypeptide reads, in one-letter code: MFS-type efflux transporter pyiT (602 aa).

Positions 1 to 33 are disordered; sequence MEKAKDSLPTTGDPVPSQGTINPVDETGGSASD. 7 helical membrane-spanning segments follow: residues 43–63, 123–143, 156–176, 185–205, 212–232, 251–271, and 282–302; these read FWFT…EGSV, WLTI…GGAT, GLGS…LLPL, IIFM…GILV, WVFY…FFFL, FFGN…LTYG, and IIVS…FEAS. The N-linked (GlcNAc...) asparagine glycan is linked to asparagine 317. 6 consecutive transmembrane segments (helical) span residues 325–345, 357–377, 386–406, 410–430, 451–471, and 524–544; these read IATF…PLYF, GVML…GGAL, NIHF…TILN, SLAV…VPTA, TFAF…AAIF, and LERV…VIFL. Polar residues predominate over residues 564 to 585; it reads IPQTAADNSASRPNTINDTASQ. The segment at 564-602 is disordered; it reads IPQTAADNSASRPNTINDTASQAPILKQRRSTNQERETV. An N-linked (GlcNAc...) asparagine glycan is attached at asparagine 580.

This sequence belongs to the major facilitator superfamily.

It is found in the cell membrane. Functionally, MFS-type efflux transporter; part of the gene cluster that mediates the biosynthesis of the mycotoxin pyrichalasin H, a tyrosine-derived cytochalasan that inhibits the growth of rice seedlings, but also inhibits lymphocyte capping and actin polymerization and alters cell morphology. Pyrichalasin H is indicated as the responsible agent for the genus-specific pathogenicity of M.grisea toward crabgrass. PyiT might be involved in the excretion of pyrichalasin H. In Pyricularia grisea (Crabgrass-specific blast fungus), this protein is MFS-type efflux transporter pyiT.